Here is a 254-residue protein sequence, read N- to C-terminus: MLTVAGVEFESRLFTGTGKFSSSQLMLEAINASKSQLVTVSMKRIDLKTGADDLLTPLRQAGVRLLPNTSGARNAKEAIFAAELAREMLGTQWIKLEIHPDPKYLMPDAVETLTAAQILCERGFIVMPYVHADPVLCRRLEDVGCAAVMPLASPIGTNQGLVTEPFIKMIIEQARVPVVIDAGIGAPSHAAHAMELGADAVLVNTAIASSASPIEMALCFRDAVNCGRRAFEAGLGRVQTQAVHTSPLTGFLQQ.

The active-site Schiff-base intermediate with DXP is lysine 95. 1-deoxy-D-xylulose 5-phosphate contacts are provided by residues glycine 156, 182–183 (AG), and 204–205 (NT).

This sequence belongs to the ThiG family. In terms of assembly, homotetramer. Forms heterodimers with either ThiH or ThiS.

It localises to the cytoplasm. The catalysed reaction is [ThiS sulfur-carrier protein]-C-terminal-Gly-aminoethanethioate + 2-iminoacetate + 1-deoxy-D-xylulose 5-phosphate = [ThiS sulfur-carrier protein]-C-terminal Gly-Gly + 2-[(2R,5Z)-2-carboxy-4-methylthiazol-5(2H)-ylidene]ethyl phosphate + 2 H2O + H(+). It participates in cofactor biosynthesis; thiamine diphosphate biosynthesis. Its function is as follows. Catalyzes the rearrangement of 1-deoxy-D-xylulose 5-phosphate (DXP) to produce the thiazole phosphate moiety of thiamine. Sulfur is provided by the thiocarboxylate moiety of the carrier protein ThiS. In vitro, sulfur can be provided by H(2)S. This chain is Thiazole synthase, found in Shewanella oneidensis (strain ATCC 700550 / JCM 31522 / CIP 106686 / LMG 19005 / NCIMB 14063 / MR-1).